Here is a 138-residue protein sequence, read N- to C-terminus: Ribosome-binding factor A (138 aa).

It belongs to the RbfA family. In terms of assembly, monomer. Binds 30S ribosomal subunits, but not 50S ribosomal subunits or 70S ribosomes.

The protein resides in the cytoplasm. In terms of biological role, one of several proteins that assist in the late maturation steps of the functional core of the 30S ribosomal subunit. Associates with free 30S ribosomal subunits (but not with 30S subunits that are part of 70S ribosomes or polysomes). Required for efficient processing of 16S rRNA. May interact with the 5'-terminal helix region of 16S rRNA. This chain is Ribosome-binding factor A, found in Pseudoalteromonas atlantica (strain T6c / ATCC BAA-1087).